Consider the following 64-residue polypeptide: Large ribosomal subunit protein bL35 (64 aa).

This sequence belongs to the bacterial ribosomal protein bL35 family.

This is Large ribosomal subunit protein bL35 from Ureaplasma parvum serovar 3 (strain ATCC 27815 / 27 / NCTC 11736).